Reading from the N-terminus, the 122-residue chain is Protein FAM223A (122 aa).

This sequence belongs to the FAM223 family.

In Homo sapiens (Human), this protein is Protein FAM223A (FAM223A).